We begin with the raw amino-acid sequence, 314 residues long: Homoserine kinase (314 aa).

96–106 provides a ligand contact to ATP; it reads PIGSGLGSSAC.

It belongs to the GHMP kinase family. Homoserine kinase subfamily.

The protein localises to the cytoplasm. The catalysed reaction is L-homoserine + ATP = O-phospho-L-homoserine + ADP + H(+). It participates in amino-acid biosynthesis; L-threonine biosynthesis; L-threonine from L-aspartate: step 4/5. Functionally, catalyzes the ATP-dependent phosphorylation of L-homoserine to L-homoserine phosphate. This chain is Homoserine kinase, found in Haemophilus influenzae (strain 86-028NP).